A 43-amino-acid chain; its full sequence is Protein PsbN (43 aa).

A helical transmembrane segment spans residues 5–27; the sequence is TVFSIFISCLLLSLTGYSLYTAF.

The protein belongs to the PsbN family.

The protein resides in the plastid. Its subcellular location is the chloroplast thylakoid membrane. In terms of biological role, may play a role in photosystem I and II biogenesis. This chain is Protein PsbN, found in Chlorokybus atmophyticus (Soil alga).